The primary structure comprises 397 residues: Lysophospholipid transporter LplT (397 aa).

Transmembrane regions (helical) follow at residues 16 to 36 (MLAV…LLFA), 53 to 73 (VLQM…GQFA), 91 to 111 (LGAG…LVGI), 139 to 159 (LMES…GILA), 164 to 184 (LAAL…NLWI), 227 to 247 (LFWG…PVAL), 253 to 273 (AMPT…AGAA), 281 to 301 (TVSR…AFAV), 305 to 325 (LLPA…FIVP), 352 to 372 (NVAM…GVPP), and 373 to 393 (VAVG…LWVW).

Belongs to the major facilitator superfamily. LplT (TC 2.A.1.42) family.

It localises to the cell inner membrane. Catalyzes the facilitated diffusion of 2-acyl-glycero-3-phosphoethanolamine (2-acyl-GPE) into the cell. This Klebsiella pneumoniae (strain 342) protein is Lysophospholipid transporter LplT.